The following is a 278-amino-acid chain: MWPFPSRSLFPPPTQAWLQTVSSDPEAQGWGAWNETKEILGPEGGEGKEEKEEEEDAEEDQDGDAGFLLSLLEQENLAECPLPDQELEAIKMKVCAMEQAEGTPRPPGVQQQAEEEEGTAAGQLLSPETVGCPLSGTPEEKVEADHRSVYVGNVDYGGSAEELEAHFSRCGEVHRVTILCDKFSGHPKGYAYIEFATKGSVQAAVELDQSLFRGRVIKVLPKRTNFPGISSTDRGGLRGHPGSRGAPFPHSGLQGRPRLRPQGQNRARGKFSPWFSPY.

Disordered regions lie at residues 21 to 66 (VSSD…GDAG) and 101 to 128 (EGTP…LSPE). Residues 35-50 (ETKEILGPEGGEGKEE) show a composition bias toward basic and acidic residues. Acidic residues predominate over residues 51–63 (KEEEEDAEEDQDG). An RRM domain is found at 147–224 (RSVYVGNVDY…RVIKVLPKRT (78 aa)). The interval 227–278 (PGISSTDRGGLRGHPGSRGAPFPHSGLQGRPRLRPQGQNRARGKFSPWFSPY) is disordered.

As to expression, expressed in various adult tissues.

Its subcellular location is the cytoplasm. Its function is as follows. Binds the poly(A) tail of mRNA. The chain is Embryonic polyadenylate-binding protein 2 (PABPN1L) from Homo sapiens (Human).